The chain runs to 635 residues: Protein phosphatase PP2A regulatory subunit A (635 aa).

The segment covering 1-27 has biased composition (low complexity); it reads MSGARSTTAGAVPSAATTSTTSTTSNS. Residues 1-33 are disordered; sequence MSGARSTTAGAVPSAATTSTTSTTSNSKDSDSN. 15 HEAT repeats span residues 34–72, 73–111, 112–150, 151–189, 190–228, 229–273, 274–316, 317–356, 357–395, 396–434, 435–473, 474–512, 513–553, 554–598, and 599–632; these read ESLY…GPER, TRNE…GGPQ, YATI…SQEQ, LFSD…KDDS, LRKN…TQNL, GLST…NAKG, DESH…SNQA, YIDE…DPSI, ILNK…NKDQ, VINN…GIEL, LSDS…GMQF, FDQQ…GSDW, CRDE…SLDV, VTEQ…YDAL, and IKNT…CQEL.

The protein belongs to the phosphatase 2A regulatory subunit A family. As to quaternary structure, PP2A exists in several trimeric forms, all of which consist of a core composed of a catalytic subunit associated with a 65 kDa regulatory subunit (PR65) (subunit A). The core complex associates with a third, variable subunit (subunit B), which confers distinct properties to the holoenzyme.

Its function is as follows. Phosphatase 2A affects a variety of biological processes in the cell such as transcription, cell cycle progression and cellular morphogenesis, and provides an initial identification of critical substrates for this phosphatase. The regulatory subunit may direct the catalytic subunit to distinct, albeit overlapping, subsets of substrates. This is Protein phosphatase PP2A regulatory subunit A (TPD3) from Saccharomyces cerevisiae (strain ATCC 204508 / S288c) (Baker's yeast).